The following is a 288-amino-acid chain: Hemin import ATP-binding protein HmuV (288 aa).

Positions 31–269 (LRARGLVVER…DLLTRVYQHP (239 aa)) constitute an ABC transporter domain. Residue 68-75 (GPNGAGKS) participates in ATP binding.

This sequence belongs to the ABC transporter superfamily. Heme (hemin) importer (TC 3.A.1.14.5) family. As to quaternary structure, the complex is composed of two ATP-binding proteins (HmuV), two transmembrane proteins (HmuU) and a solute-binding protein (HmuT).

The protein resides in the cell membrane. In terms of biological role, part of the ABC transporter complex HmuTUV involved in hemin import. Responsible for energy coupling to the transport system. The polypeptide is Hemin import ATP-binding protein HmuV (Nocardia farcinica (strain IFM 10152)).